Consider the following 454-residue polypeptide: tRNA modification GTPase MnmE (454 aa).

Positions 23, 80, and 120 each coordinate (6S)-5-formyl-5,6,7,8-tetrahydrofolate. A TrmE-type G domain is found at 216–377; the sequence is GMKVVIAGRP…LRDHLKQSMG (162 aa). N226 contributes to the K(+) binding site. GTP-binding positions include 226-231, 245-251, 270-273, 335-338, and 358-360; these read NAGKSS, TDIAGTT, DTAG, NKAD, and SAR. Residue S230 participates in Mg(2+) binding. Residues T245, I247, and T250 each contribute to the K(+) site. T251 lines the Mg(2+) pocket. K454 provides a ligand contact to (6S)-5-formyl-5,6,7,8-tetrahydrofolate.

Belongs to the TRAFAC class TrmE-Era-EngA-EngB-Septin-like GTPase superfamily. TrmE GTPase family. As to quaternary structure, homodimer. Heterotetramer of two MnmE and two MnmG subunits. Requires K(+) as cofactor.

It is found in the cytoplasm. Its function is as follows. Exhibits a very high intrinsic GTPase hydrolysis rate. Involved in the addition of a carboxymethylaminomethyl (cmnm) group at the wobble position (U34) of certain tRNAs, forming tRNA-cmnm(5)s(2)U34. This chain is tRNA modification GTPase MnmE, found in Yersinia pseudotuberculosis serotype O:1b (strain IP 31758).